Consider the following 361-residue polypeptide: tRNA/tmRNA (uracil-C(5))-methyltransferase (361 aa).

Residues Gln185, Tyr213, Asn218, Glu234, and Asp294 each contribute to the S-adenosyl-L-methionine site. Residue Cys319 is the Nucleophile of the active site. The Proton acceptor role is filled by Glu353.

It belongs to the class I-like SAM-binding methyltransferase superfamily. RNA M5U methyltransferase family. TrmA subfamily.

The catalysed reaction is uridine(54) in tRNA + S-adenosyl-L-methionine = 5-methyluridine(54) in tRNA + S-adenosyl-L-homocysteine + H(+). It catalyses the reaction uridine(341) in tmRNA + S-adenosyl-L-methionine = 5-methyluridine(341) in tmRNA + S-adenosyl-L-homocysteine + H(+). Its function is as follows. Dual-specificity methyltransferase that catalyzes the formation of 5-methyluridine at position 54 (m5U54) in all tRNAs, and that of position 341 (m5U341) in tmRNA (transfer-mRNA). The chain is tRNA/tmRNA (uracil-C(5))-methyltransferase from Pseudomonas putida (strain ATCC 700007 / DSM 6899 / JCM 31910 / BCRC 17059 / LMG 24140 / F1).